Consider the following 163-residue polypeptide: Nucleotide-binding protein KPK_4305 (163 aa).

It belongs to the YajQ family.

Nucleotide-binding protein. The chain is Nucleotide-binding protein KPK_4305 from Klebsiella pneumoniae (strain 342).